The sequence spans 476 residues: DnaJ protein P58IPK homolog A (476 aa).

The signal sequence occupies residues 1–28; that stretch reads MVAMARWPWRVLLPLLLLHSSPVFFVFA. TPR repeat units lie at residues 36 to 69, 70 to 103, 116 to 150, 152 to 184, 185 to 218, 231 to 264, 269 to 302, and 304 to 336; these read PSTLFKRALEMMNLRKYDGSLGLLNAVLEVEPNH, SEAYRQRASVLRHKCRYKEAEGDYSKYLELKPGS, AQNALESAYGQFESHDFSKVLDYINKIVLVFSPDC, KAKLLKAKALLALKDYSTVISETGFILKEDEDN, LDALLLRGRAYYYLADHDVASRHYQKGLRLDPEH, LVKKTKSAEDNAAKGKLRVSAEDYKASLAMDPDH, VHLYLGLCKVLVKLGRGKEAISSCTEALNIDGEL, and DALTQRGEAKLLTEDWEGAVQDLKEAAQKSPQD. A J domain is found at 357–423; sequence DWYKILGISK…DKRVRYDRGE (67 aa).

As to quaternary structure, interacts with BIP1.

The protein localises to the endoplasmic reticulum lumen. May play a role in protein folding in the endoplasmic reticulum. The chain is DnaJ protein P58IPK homolog A from Oryza sativa subsp. japonica (Rice).